The primary structure comprises 692 residues: A-type ATP synthase subunit I (692 aa).

The next 7 helical transmembrane spans lie at Gly389–Trp409, Leu422–Gly442, Ile494–Phe514, Gly531–Ala551, Thr553–Tyr573, Ala602–Ala622, and Leu624–Gly644.

The protein belongs to the V-ATPase 116 kDa subunit family. In terms of assembly, the A-type ATPase is composed of subunits A(3), B(3), C, D, E(1 or 2), F, H(2), I and K(x).

The protein localises to the cell membrane. Functionally, component of the A-type ATP synthase that produces ATP from ADP in the presence of a proton gradient across the membrane. The sequence is that of A-type ATP synthase subunit I from Methanocaldococcus jannaschii (strain ATCC 43067 / DSM 2661 / JAL-1 / JCM 10045 / NBRC 100440) (Methanococcus jannaschii).